The chain runs to 507 residues: Probable Xaa-Pro aminopeptidase ARB_01886 (507 aa).

Residues aspartate 275, aspartate 286, glutamate 434, and glutamate 478 each contribute to the Mn(2+) site.

It belongs to the peptidase M24B family. It depends on Mn(2+) as a cofactor.

The catalysed reaction is Release of any N-terminal amino acid, including proline, that is linked to proline, even from a dipeptide or tripeptide.. Functionally, catalyzes the removal of a penultimate prolyl residue from the N-termini of peptides. This chain is Probable Xaa-Pro aminopeptidase ARB_01886, found in Arthroderma benhamiae (strain ATCC MYA-4681 / CBS 112371) (Trichophyton mentagrophytes).